We begin with the raw amino-acid sequence, 196 residues long: uncharacterized protein (196 aa).

This is an uncharacterized protein from Mycoplasma pneumoniae (strain ATCC 29342 / M129 / Subtype 1) (Mycoplasmoides pneumoniae).